We begin with the raw amino-acid sequence, 82 residues long: Sec-independent protein translocase protein TatA (82 aa).

A helical membrane pass occupies residues 1 to 21 (MLGFGPFELILIVVIIALLFG). A compositionally biased stretch (basic and acidic residues) spans 36–47 (IKEFKQEMHEPS). The disordered stretch occupies residues 36–82 (IKEFKQEMHEPSPPRPQVTDIPSQRLDPVTGAPVSTESTVPASDRRS).

The protein belongs to the TatA/E family. Forms a complex with TatC.

The protein localises to the cell membrane. Functionally, part of the twin-arginine translocation (Tat) system that transports large folded proteins containing a characteristic twin-arginine motif in their signal peptide across membranes. TatA could form the protein-conducting channel of the Tat system. The protein is Sec-independent protein translocase protein TatA of Deinococcus deserti (strain DSM 17065 / CIP 109153 / LMG 22923 / VCD115).